The sequence spans 401 residues: tRNA(Ile)-lysidine synthase (401 aa).

Residue 17–22 (SGGPDS) participates in ATP binding.

This sequence belongs to the tRNA(Ile)-lysidine synthase family.

It localises to the cytoplasm. The catalysed reaction is cytidine(34) in tRNA(Ile2) + L-lysine + ATP = lysidine(34) in tRNA(Ile2) + AMP + diphosphate + H(+). In terms of biological role, ligates lysine onto the cytidine present at position 34 of the AUA codon-specific tRNA(Ile) that contains the anticodon CAU, in an ATP-dependent manner. Cytidine is converted to lysidine, thus changing the amino acid specificity of the tRNA from methionine to isoleucine. The polypeptide is tRNA(Ile)-lysidine synthase (Mycoplasma mycoides subsp. mycoides SC (strain CCUG 32753 / NCTC 10114 / PG1)).